The primary structure comprises 432 residues: Histidine--tRNA ligase (432 aa).

Positions 412-432 are disordered; that stretch reads TQVPLAAFPPEEGRPTYDDYA. Residues 422 to 432 are compositionally biased toward basic and acidic residues; sequence EEGRPTYDDYA.

This sequence belongs to the class-II aminoacyl-tRNA synthetase family.

It is found in the cytoplasm. It carries out the reaction tRNA(His) + L-histidine + ATP = L-histidyl-tRNA(His) + AMP + diphosphate + H(+). This is Histidine--tRNA ligase from Natronomonas pharaonis (strain ATCC 35678 / DSM 2160 / CIP 103997 / JCM 8858 / NBRC 14720 / NCIMB 2260 / Gabara) (Halobacterium pharaonis).